Reading from the N-terminus, the 241-residue chain is Biosynthetic peptidoglycan transglycosylase (241 aa).

The helical transmembrane segment at 18–38 (GVIGIIALWMAGILIFAFLPV) threads the bilayer.

Belongs to the glycosyltransferase 51 family.

It localises to the cell inner membrane. It catalyses the reaction [GlcNAc-(1-&gt;4)-Mur2Ac(oyl-L-Ala-gamma-D-Glu-L-Lys-D-Ala-D-Ala)](n)-di-trans,octa-cis-undecaprenyl diphosphate + beta-D-GlcNAc-(1-&gt;4)-Mur2Ac(oyl-L-Ala-gamma-D-Glu-L-Lys-D-Ala-D-Ala)-di-trans,octa-cis-undecaprenyl diphosphate = [GlcNAc-(1-&gt;4)-Mur2Ac(oyl-L-Ala-gamma-D-Glu-L-Lys-D-Ala-D-Ala)](n+1)-di-trans,octa-cis-undecaprenyl diphosphate + di-trans,octa-cis-undecaprenyl diphosphate + H(+). Its pathway is cell wall biogenesis; peptidoglycan biosynthesis. In terms of biological role, peptidoglycan polymerase that catalyzes glycan chain elongation from lipid-linked precursors. In Yersinia pseudotuberculosis serotype IB (strain PB1/+), this protein is Biosynthetic peptidoglycan transglycosylase.